A 94-amino-acid chain; its full sequence is Large ribosomal subunit protein eL37 (94 aa).

Zn(2+) is bound by residues C19, C22, C34, and C37. The C4-type zinc finger occupies C19 to C37.

Belongs to the eukaryotic ribosomal protein eL37 family. The cofactor is Zn(2+).

It is found in the cytoplasm. Binds to the 23S rRNA. This Tetrahymena thermophila (strain SB210) protein is Large ribosomal subunit protein eL37 (RPL37).